Consider the following 85-residue polypeptide: Large ribosomal subunit protein bL27 (85 aa).

Belongs to the bacterial ribosomal protein bL27 family.

This Vesicomyosocius okutanii subsp. Calyptogena okutanii (strain HA) protein is Large ribosomal subunit protein bL27.